The chain runs to 497 residues: Aspartyl/glutamyl-tRNA(Asn/Gln) amidotransferase subunit B (497 aa).

It belongs to the GatB/GatE family. GatB subfamily. In terms of assembly, heterotrimer of A, B and C subunits.

It catalyses the reaction L-glutamyl-tRNA(Gln) + L-glutamine + ATP + H2O = L-glutaminyl-tRNA(Gln) + L-glutamate + ADP + phosphate + H(+). The catalysed reaction is L-aspartyl-tRNA(Asn) + L-glutamine + ATP + H2O = L-asparaginyl-tRNA(Asn) + L-glutamate + ADP + phosphate + 2 H(+). In terms of biological role, allows the formation of correctly charged Asn-tRNA(Asn) or Gln-tRNA(Gln) through the transamidation of misacylated Asp-tRNA(Asn) or Glu-tRNA(Gln) in organisms which lack either or both of asparaginyl-tRNA or glutaminyl-tRNA synthetases. The reaction takes place in the presence of glutamine and ATP through an activated phospho-Asp-tRNA(Asn) or phospho-Glu-tRNA(Gln). The chain is Aspartyl/glutamyl-tRNA(Asn/Gln) amidotransferase subunit B from Nocardioides sp. (strain ATCC BAA-499 / JS614).